A 23-amino-acid chain; its full sequence is Caerin-4.2 (23 aa).

Expressed by the skin parotoid and/or rostral glands.

The protein resides in the secreted. In terms of biological role, antibacterial peptide, that adopts an alpha helical conformation which can disrupt bacterial membranes. Each caerin displays a different antimicrobial specificity. This chain is Caerin-4.2, found in Ranoidea caerulea (Green tree frog).